The sequence spans 194 residues: Ion-translocating oxidoreductase complex subunit B (194 aa).

The interval 1-26 (MSGVLIAVAALLALAAVFGAVLGFAS) is hydrophobic. The 59-residue stretch at 32-90 (EGDPIVDQIDSLLPQTQCGQCGHPGCRPYAEAIAEGEEHNRCPPGGQDTVVALSELLGR) folds into the 4Fe-4S domain. [4Fe-4S] cluster contacts are provided by cysteine 49, cysteine 52, cysteine 57, cysteine 73, cysteine 116, cysteine 119, cysteine 122, cysteine 126, cysteine 146, cysteine 149, cysteine 152, and cysteine 156. 4Fe-4S ferredoxin-type domains lie at 107–136 (KVAY…GAAK) and 137–166 (LMHT…MLEV).

Belongs to the 4Fe4S bacterial-type ferredoxin family. RnfB subfamily. In terms of assembly, the complex is composed of six subunits: RnfA, RnfB, RnfC, RnfD, RnfE and RnfG. Requires [4Fe-4S] cluster as cofactor.

The protein resides in the cell inner membrane. Part of a membrane-bound complex that couples electron transfer with translocation of ions across the membrane. This is Ion-translocating oxidoreductase complex subunit B from Alcanivorax borkumensis (strain ATCC 700651 / DSM 11573 / NCIMB 13689 / SK2).